Reading from the N-terminus, the 431-residue chain is L-ornithine N(5)-monooxygenase (431 aa).

FAD is bound by residues 40 to 48 (EKLPTFSWH) and glutamine 59. Residue lysine 64 participates in substrate binding. NADP(+) contacts are provided by residues 202–205 (CGQS) and arginine 228. Residues 242 to 245 (NSLY) and asparagine 273 contribute to the substrate site. Residue 273 to 275 (NYS) participates in NADP(+) binding. 399 to 401 (TLL) contacts FAD. A substrate-binding site is contributed by serine 402.

The protein belongs to the lysine N(6)-hydroxylase/L-ornithine N(5)-oxygenase family. FAD serves as cofactor.

The protein localises to the cytoplasm. The protein resides in the nucleus. The enzyme catalyses L-ornithine + NADPH + O2 = N(5)-hydroxy-L-ornithine + NADP(+) + H2O. The catalysed reaction is L-ornithine + NADH + O2 = N(5)-hydroxy-L-ornithine + NAD(+) + H2O. It participates in siderophore biosynthesis; ferrichrome biosynthesis. Functionally, catalyzes the conversion of L-ornithine to N(5)-hydroxyornithine, the first step in the biosynthesis of all hydroxamate-containing siderophores, such as ferrichrome. The protein is L-ornithine N(5)-monooxygenase of Schizosaccharomyces pombe (strain 972 / ATCC 24843) (Fission yeast).